The sequence spans 289 residues: 3-methyl-2-oxobutanoate hydroxymethyltransferase (289 aa).

Over residues 1-15 (MSTTFKLDTSTSRAN) the composition is skewed to polar residues. Residues 1 to 21 (MSTTFKLDTSTSRANPTPAPM) form a disordered region. Asp67 and Asp106 together coordinate Mg(2+). Residues 67–68 (DS), Asp106, and Lys136 each bind 3-methyl-2-oxobutanoate. Mg(2+) is bound at residue Glu138. Residue Glu205 is the Proton acceptor of the active site.

Belongs to the PanB family. In terms of assembly, homodecamer; pentamer of dimers. Requires Mg(2+) as cofactor.

The protein resides in the cytoplasm. It catalyses the reaction 3-methyl-2-oxobutanoate + (6R)-5,10-methylene-5,6,7,8-tetrahydrofolate + H2O = 2-dehydropantoate + (6S)-5,6,7,8-tetrahydrofolate. Its pathway is cofactor biosynthesis; (R)-pantothenate biosynthesis; (R)-pantoate from 3-methyl-2-oxobutanoate: step 1/2. Functionally, catalyzes the reversible reaction in which hydroxymethyl group from 5,10-methylenetetrahydrofolate is transferred onto alpha-ketoisovalerate to form ketopantoate. The sequence is that of 3-methyl-2-oxobutanoate hydroxymethyltransferase from Erythrobacter litoralis (strain HTCC2594).